The primary structure comprises 647 residues: Pollen receptor-like kinase 2 (647 aa).

The signal sequence occupies residues 1-21 (MESKCLMFVSIVSVFFMVVNG). 5 LRR repeats span residues 87-109 (LNSL…EFKK), 110-134 (LVAL…AFDG), 136-159 (GWLK…LVKS), 161-183 (KLIE…RHHP), and 185-203 (MLNL…SFST). Residues 248 to 268 (IVAAAVAALAASLIIIGVVIF) traverse the membrane as a helical segment. In terms of domain architecture, Protein kinase spans 338–613 (KASAEILGSG…EAVEKMEDLM (276 aa)). Ser340 carries the post-translational modification Phosphoserine. ATP-binding positions include 344–352 (LGSGCFGAS) and Lys366. Ser418 is modified (phosphoserine). Position 438 is a phosphothreonine (Thr438). Tyr508 is subject to Phosphotyrosine. Residues 620-647 (DDDFYSTYASEADGRSSRGLSSEGINLS) are disordered. Residues 637–647 (RGLSSEGINLS) show a composition bias toward polar residues.

It belongs to the protein kinase superfamily. Ser/Thr protein kinase family. Part of a complex containing ROPGEF1 and ARAC11/ROP1. The interaction between PRK2, ROPGEF1 and ARAC11/ROP1 is phosphorylation-independent. Interacts with ROPGEF12 (via C-terminus). Interacts with ROPGEF1 (via PRONE domain). As to expression, expressed in pollen and/or in flowers, but not in leaves. Expressed in pollen tube.

The protein resides in the cell membrane. It catalyses the reaction L-seryl-[protein] + ATP = O-phospho-L-seryl-[protein] + ADP + H(+). The enzyme catalyses L-threonyl-[protein] + ATP = O-phospho-L-threonyl-[protein] + ADP + H(+). With respect to regulation, the phosphorylation activity is calcium-independent. In terms of biological role, receptor-like kinase involved in the control of pollen germination and pollen tube polar growth. Phosphorylates ROPGEF1 in its C-terminal region, releasing its auto-inhibition, and thereby activating the ROP1 signaling pathway. May act as a scaffolding protein, recruiting ROPGEF12 to the plasma membrane by binding to its C-terminal domain. Phosphorylates ROPGEF12, releasing its auto-inhibition. The sequence is that of Pollen receptor-like kinase 2 from Arabidopsis thaliana (Mouse-ear cress).